The following is a 473-amino-acid chain: MRNPKSFCVVAGFVRLPKSSLGQARYYSIPNDVSIPASKRKFIPSSGTYPKGFLVAGAHAGVKESNTQFPDVALICSETPCSAAAVFTTNKFQAAPVQVSKQVLEKRQGTGIRGVVINSGCANAVTGKGGLEDAKMMSAKVDECNGTPSTGPQDTSTLVMSTGVIGQRLPIKKILDAIPTAHSNLASTHSTWLATARAICTTDTFPKLLSRTFTLPSSPNRQYCLAGMTKGAGMIHPNMATLLGILCTDVPISPSALKALLTHAVSRSFNAISIDGDTSTNDTIALLANGAAGGEAIITTSSPDYAAMQTILTSFAQSLAQLVVRDGEGATKFITVRVCNSPSHADAKVIASTIARSPLVKTALYGKDANWGRILCAIGYAQGIAEGTVVPERTSVSFRPVDGSAELKLLVNGEPEAVDEERAARILQDEDLEIVVDLGGGQKGEKGLGGEEGLYWFCDFSHEYVTINGDYRT.

6 residues coordinate substrate: Thr-201, Lys-230, Thr-241, Glu-328, Asn-468, and Thr-473. The active-site Nucleophile is Thr-241.

The protein belongs to the ArgJ family. In terms of assembly, heterodimer of an alpha and a beta chain. The alpha and beta chains are autoproteolytically processed from a single precursor protein within the mitochondrion.

Its subcellular location is the mitochondrion matrix. The enzyme catalyses N(2)-acetyl-L-ornithine + L-glutamate = N-acetyl-L-glutamate + L-ornithine. It carries out the reaction L-glutamate + acetyl-CoA = N-acetyl-L-glutamate + CoA + H(+). The protein operates within amino-acid biosynthesis; L-arginine biosynthesis; L-ornithine and N-acetyl-L-glutamate from L-glutamate and N(2)-acetyl-L-ornithine (cyclic): step 1/1. It functions in the pathway amino-acid biosynthesis; L-arginine biosynthesis; N(2)-acetyl-L-ornithine from L-glutamate: step 1/4. Its function is as follows. Catalyzes two activities which are involved in the cyclic version of arginine biosynthesis: the synthesis of acetylglutamate from glutamate and acetyl-CoA, and of ornithine by transacetylation between acetylornithine and glutamate. The protein is Arginine biosynthesis bifunctional protein ArgJ, mitochondrial of Ajellomyces capsulatus (strain G186AR / H82 / ATCC MYA-2454 / RMSCC 2432) (Darling's disease fungus).